The following is a 324-amino-acid chain: MIALGIEGTAHTLGIGIVTEDKVLANVFNTLTTEKGGIHPKEAAEHHAKLLRPLLKKALQEAKVNIKDVDVIAFSQGPGLGPALRVVATAARALALRYNKPIVGVNHCIAHVEVTKMFGIKDPVGLYVSGGNTQILALEGGRYRVFGETLDIGIGNAIDTFAREIGLGFPGGPKIEKLAQRGEKYIELPYTVKGMDLSFSGILTEAVRKYKTGKYKLEDIAYSFQETAFAALIEVTERAVAHTGKEEVVLVGGVAANNRLREMLKTMSEERSIKFFVPPYDLCRDNGAMIAYNGLRMFKAGIRFNIEETIVKQKFRTDEMEVTW.

Fe cation is bound by residues His-107, His-111, and Tyr-127. Residues 127 to 131 (YVSGG), Asp-159, Gly-172, Glu-176, and Asn-257 contribute to the substrate site. Asp-285 is a Fe cation binding site.

Belongs to the KAE1 / TsaD family. In terms of assembly, monomer. Component of the KEOPS complex that consists of Kae1, Bud32, Cgi121 and Pcc1; the whole complex dimerizes. Requires Fe(2+) as cofactor.

It is found in the cytoplasm. The catalysed reaction is L-threonylcarbamoyladenylate + adenosine(37) in tRNA = N(6)-L-threonylcarbamoyladenosine(37) in tRNA + AMP + H(+). Its function is as follows. Required for the formation of a threonylcarbamoyl group on adenosine at position 37 (t(6)A37) in tRNAs that read codons beginning with adenine. Is a component of the KEOPS complex that is probably involved in the transfer of the threonylcarbamoyl moiety of threonylcarbamoyl-AMP (TC-AMP) to the N6 group of A37. Kae1 likely plays a direct catalytic role in this reaction, but requires other protein(s) of the complex to fulfill this activity. The polypeptide is tRNA N6-adenosine threonylcarbamoyltransferase (Thermococcus sibiricus (strain DSM 12597 / MM 739)).